The chain runs to 295 residues: Pyridoxal 5'-phosphate synthase subunit PdxS (295 aa).

D25 serves as a coordination point for D-ribose 5-phosphate. The active-site Schiff-base intermediate with D-ribose 5-phosphate is K82. Residue G154 coordinates D-ribose 5-phosphate. R166 is a D-glyceraldehyde 3-phosphate binding site. D-ribose 5-phosphate is bound by residues G215 and G236 to S237.

It belongs to the PdxS/SNZ family. In the presence of PdxT, forms a dodecamer of heterodimers.

It carries out the reaction aldehydo-D-ribose 5-phosphate + D-glyceraldehyde 3-phosphate + L-glutamine = pyridoxal 5'-phosphate + L-glutamate + phosphate + 3 H2O + H(+). Its pathway is cofactor biosynthesis; pyridoxal 5'-phosphate biosynthesis. Catalyzes the formation of pyridoxal 5'-phosphate from ribose 5-phosphate (RBP), glyceraldehyde 3-phosphate (G3P) and ammonia. The ammonia is provided by the PdxT subunit. Can also use ribulose 5-phosphate and dihydroxyacetone phosphate as substrates, resulting from enzyme-catalyzed isomerization of RBP and G3P, respectively. The polypeptide is Pyridoxal 5'-phosphate synthase subunit PdxS (Listeria innocua serovar 6a (strain ATCC BAA-680 / CLIP 11262)).